The chain runs to 1161 residues: Auxin response factor 19 (1161 aa).

The disordered stretch occupies residues 1-20 (MMKQAQQQPPPPPASSAATT). The TF-B3 DNA-binding region spans 154–256 (FCKTLTASDT…QLLLGIRRAN (103 aa)). The disordered stretch occupies residues 573–598 (NQMQQQHASSTQGQQPATSQPLLLPQ). The PB1 domain maps to 1027-1111 (RTFTKVYKRG…KCIRILSPQE (85 aa)).

The protein belongs to the ARF family. As to quaternary structure, homodimers and heterodimers. In terms of tissue distribution, expressed in roots, culms, leaves and young panicles.

Its subcellular location is the nucleus. Functionally, auxin response factors (ARFs) are transcriptional factors that bind specifically to the DNA sequence 5'-TGTCTC-3' found in the auxin-responsive promoter elements (AuxREs). In Oryza sativa subsp. japonica (Rice), this protein is Auxin response factor 19 (ARF19).